The following is a 331-amino-acid chain: Bifunctional nuclease 1 (331 aa).

Positions 126 to 261 (CVQNNPRVLR…RIAYNNGLKV (136 aa)) constitute a BFN domain. A UVR domain is found at 291–326 (EAQEFDLVRNMLVAAVEERYKDAAQYRDQLFMFRAK).

The protein belongs to the bifunctional nuclease family.

Its subcellular location is the nucleus. Its function is as follows. Bifunctional nuclease with both RNase and DNase activities. Involved in basal defense response. Participates in abscisic acid-derived callose deposition following infection by a necrotrophic pathogen. This chain is Bifunctional nuclease 1 (BBD1), found in Oryza sativa subsp. indica (Rice).